A 311-amino-acid chain; its full sequence is Methionyl-tRNA formyltransferase (311 aa).

A (6S)-5,6,7,8-tetrahydrofolate-binding site is contributed by 109–112 (SLLP).

The protein belongs to the Fmt family.

The catalysed reaction is L-methionyl-tRNA(fMet) + (6R)-10-formyltetrahydrofolate = N-formyl-L-methionyl-tRNA(fMet) + (6S)-5,6,7,8-tetrahydrofolate + H(+). In terms of biological role, attaches a formyl group to the free amino group of methionyl-tRNA(fMet). The formyl group appears to play a dual role in the initiator identity of N-formylmethionyl-tRNA by promoting its recognition by IF2 and preventing the misappropriation of this tRNA by the elongation apparatus. This is Methionyl-tRNA formyltransferase from Staphylococcus aureus (strain USA300).